The primary structure comprises 612 residues: Dihydroxy-acid dehydratase (612 aa).

Aspartate 81 provides a ligand contact to Mg(2+). Cysteine 122 is a binding site for [2Fe-2S] cluster. Residues aspartate 123 and lysine 124 each contribute to the Mg(2+) site. Lysine 124 carries the N6-carboxylysine modification. A [2Fe-2S] cluster-binding site is contributed by cysteine 195. Glutamate 491 contacts Mg(2+). The active-site Proton acceptor is serine 517.

The protein belongs to the IlvD/Edd family. Homodimer. It depends on [2Fe-2S] cluster as a cofactor. Requires Mg(2+) as cofactor.

It catalyses the reaction (2R)-2,3-dihydroxy-3-methylbutanoate = 3-methyl-2-oxobutanoate + H2O. The enzyme catalyses (2R,3R)-2,3-dihydroxy-3-methylpentanoate = (S)-3-methyl-2-oxopentanoate + H2O. Its pathway is amino-acid biosynthesis; L-isoleucine biosynthesis; L-isoleucine from 2-oxobutanoate: step 3/4. The protein operates within amino-acid biosynthesis; L-valine biosynthesis; L-valine from pyruvate: step 3/4. In terms of biological role, functions in the biosynthesis of branched-chain amino acids. Catalyzes the dehydration of (2R,3R)-2,3-dihydroxy-3-methylpentanoate (2,3-dihydroxy-3-methylvalerate) into 2-oxo-3-methylpentanoate (2-oxo-3-methylvalerate) and of (2R)-2,3-dihydroxy-3-methylbutanoate (2,3-dihydroxyisovalerate) into 2-oxo-3-methylbutanoate (2-oxoisovalerate), the penultimate precursor to L-isoleucine and L-valine, respectively. This chain is Dihydroxy-acid dehydratase, found in Rhizobium rhizogenes (strain K84 / ATCC BAA-868) (Agrobacterium radiobacter).